We begin with the raw amino-acid sequence, 930 residues long: MIIVKLTANRICCSLLQLRRSYEHFYIFVFLPEIPLFRFSHLKLFPKNLQIQRLVSAMMERTYGRRKPGIPRTLSDSLNDSVSQTEYLSSSSSPDIEPIDYSLLPFSSQESSSLWHSSSRSNFREDYPQNGGVVRRAKRVRNGAEAAAFTSTLLEAQEFGELMEHEDEVNFALDGLRKGHQLRIRRASLSSLLSICASQHQRRSLRAQGISQSIIDAILVLSLDDIPSNLAAATLFFALTADGQDEHFMESPKCIKFLIKLLKPVIVTSTEGKPRNIGFKLLSLLKDVDAARDPVKMDDPSSSDILSRVQELLVNCKEMRLNDSYITETTRPELSTKWVALLAMERACVSKISFDDTSGSVKKTGGNFKEKLRELGGLDAVLEVVMDCHAVMERWVEYDALSVQEKKDNLHKQSLMLLLKCLKIMENATFLSTDNQNHLLGFKKCLGSHDSRMSFTELTISVIKMLSGLHLRGGFSSPNTNNVNSHYSNGGNHDSVLEANRKVTNEVVTISSDTYSTVGSISTRNGSVSQRSQSIIHLDFSPTSMSGSQSSVSGNEPTTSKTRVGSTISGSFAGRLASLGSDIARTTLRTTQAGEPICKKFGEFAPPEESEDPFAFDLEDYKPSKWAVVSVNQKKSRAQKKKGCYKQSKDESLYQLFSSQEESSNHRLNSQEESSNRDCSTSLQPSHCTNDIDEECLCLLFDCLLTAVKVLMNLTNDNVVGCRQVGGCRGLESMAELIARHFPSFTRSQLFSEMEKTGSSHQKKDKYLTDQELDFLVAILGLLVNLVERDGVNRSRLASASVPITKPEELQESEQEMIPLLCSIFLTNQGSAETKEETTTFTLDDEEAVLEGEKEAEKMIVEAYSALLLAFLSTESRSIRNSIKDYLPKRNLAILVPVLERFVAFHMTLNMIPPETHKAVMGVIESCKSP.

A disordered region spans residues 540 to 566 (FSPTSMSGSQSSVSGNEPTTSKTRVGS). A compositionally biased stretch (low complexity) spans 541 to 553 (SPTSMSGSQSSVS). Over residues 554 to 566 (GNEPTTSKTRVGS) the composition is skewed to polar residues. In terms of domain architecture, WAPL spans 854 to 909 (KEAEKMIVEAYSALLLAFLSTESRSIRNSIKDYLPKRNLAILVPVLERFVAFHMTL).

This sequence belongs to the WAPL family. In terms of assembly, interacts with the cohesin complex throughout the cell cycle. In terms of tissue distribution, expressed in roots, leaves, buds and siliques.

Its subcellular location is the nucleus. The protein localises to the chromosome. Its function is as follows. Regulator of sister chromatid cohesion in meiosis which negatively regulates cohesin association with chromatin, acting as an antagonist of CTF7. Cohesion ensures that chromosome partitioning is accurate in both meiotic and mitotic cells and plays an important role in DNA repair. Essential for the prophase removal of cohesin during meiosis thus determining the timely release of meiotic cohesion. Important for proper spindle attachment and assembly during meiosis. Helps to prevent abnormal centromere association during prophase I in meiocytes. Required for early embryonic patterning. Also involved in chromosome segregation during mitosis. The protein is Wings apart-like protein 1 of Arabidopsis thaliana (Mouse-ear cress).